We begin with the raw amino-acid sequence, 117 residues long: Probable prefoldin subunit 1 (117 aa).

Belongs to the prefoldin subunit beta family. Heterohexamer of two PFD-alpha type and four PFD-beta type subunits. As to expression, expressed in the distal cell tip of developing embryos.

Its subcellular location is the cytoplasm. Functionally, binds specifically to cytosolic chaperonin (c-CPN) and transfers target proteins to it. Binds to nascent polypeptide chain and promotes folding in an environment in which there are many competing pathways for nonnative proteins. Has a role in gonadogenesis. The protein is Probable prefoldin subunit 1 (pfd-1) of Caenorhabditis elegans.